A 21-amino-acid polypeptide reads, in one-letter code: Fibrinogen beta chain (21 aa).

Gln1 carries the pyrrolidone carboxylic acid modification. Residue Tyr6 is modified to Sulfotyrosine.

In terms of assembly, heterohexamer; disulfide linked. Contains 2 sets of 3 non-identical chains (alpha, beta and gamma). The 2 heterotrimers are in head to head conformation with the N-termini in a small central domain. Post-translationally, conversion of fibrinogen to fibrin is triggered by thrombin, which cleaves fibrinopeptides A and B from alpha and beta chains, and thus exposes the N-terminal polymerization sites responsible for the formation of the soft clot.

The protein resides in the secreted. Cleaved by the protease thrombin to yield monomers which, together with fibrinogen alpha (FGA) and fibrinogen gamma (FGG), polymerize to form an insoluble fibrin matrix. Fibrin has a major function in hemostasis as one of the primary components of blood clots. In addition, functions during the early stages of wound repair to stabilize the lesion and guide cell migration during re-epithelialization. Was originally thought to be essential for platelet aggregation, based on in vitro studies using anticoagulated blood. However subsequent studies have shown that it is not absolutely required for thrombus formation in vivo. Enhances expression of SELP in activated platelets. Maternal fibrinogen is essential for successful pregnancy. Fibrin deposition is also associated with infection, where it protects against IFNG-mediated hemorrhage. May also facilitate the antibacterial immune response via both innate and T-cell mediated pathways. The sequence is that of Fibrinogen beta chain (FGB) from Rangifer tarandus (Reindeer).